Here is a 250-residue protein sequence, read N- to C-terminus: 5'-nucleotidase SurE (250 aa).

Positions 8, 9, 39, and 95 each coordinate a divalent metal cation.

It belongs to the SurE nucleotidase family. A divalent metal cation is required as a cofactor.

The protein localises to the cytoplasm. It carries out the reaction a ribonucleoside 5'-phosphate + H2O = a ribonucleoside + phosphate. Its function is as follows. Nucleotidase that shows phosphatase activity on nucleoside 5'-monophosphates. In Cupriavidus necator (strain ATCC 17699 / DSM 428 / KCTC 22496 / NCIMB 10442 / H16 / Stanier 337) (Ralstonia eutropha), this protein is 5'-nucleotidase SurE.